A 136-amino-acid polypeptide reads, in one-letter code: Acidic phospholipase A2 CC-PLA2-2 (136 aa).

The first 16 residues, 1–16 (MRTLWIVAVWLMGVEG), serve as a signal peptide directing secretion. 7 disulfide bridges follow: cysteine 42/cysteine 129, cysteine 44/cysteine 60, cysteine 59/cysteine 109, cysteine 65/cysteine 136, cysteine 66/cysteine 102, cysteine 73/cysteine 95, and cysteine 90/cysteine 100. Ca(2+) contacts are provided by tyrosine 43, glycine 45, and glycine 47. Histidine 63 is an active-site residue. A Ca(2+)-binding site is contributed by aspartate 64. Residue aspartate 103 is part of the active site.

Belongs to the phospholipase A2 family. Group II subfamily. D49 sub-subfamily. Requires Ca(2+) as cofactor. In terms of processing, glycosylated (2.5%). Expressed by the venom gland.

It is found in the secreted. The catalysed reaction is a 1,2-diacyl-sn-glycero-3-phosphocholine + H2O = a 1-acyl-sn-glycero-3-phosphocholine + a fatty acid + H(+). Snake venom phospholipase A2 that inhibits blood coagulation and platelet aggregation induced by ADP and arachidonic acid. Inhibits tumor cell adhesion and migration in a dose-dependent manner. Abolishes the attachment of human brain microvascular endothelial cells (HBMEC) to fibrinogen (IC(50)=0.2 uM) and dramatically reduces its adhesion to fibronectin (IC(50)=0.3 uM), whereas no effect is observed on type I collagen, vitronectin or laminin 1. Also blocks the cell migration toward fibronectin and fibrinogen. These effects are not dependent of the catalytic activity, but are mediated by alpha-5/beta-1 (ITGA5/ITGB1) and alpha-v-containing (ITGAV) integrins. Also shows anti-angiogenic activity in chicken chorioallantoix membrane assay. Has a relatively high enzymatic activity. PLA2 catalyzes the calcium-dependent hydrolysis of the 2-acyl groups in 3-sn-phosphoglycerides. The chain is Acidic phospholipase A2 CC-PLA2-2 from Cerastes cerastes (Horned desert viper).